A 150-amino-acid chain; its full sequence is Flagellar assembly factor FliW (150 aa).

Belongs to the FliW family. As to quaternary structure, interacts with translational regulator CsrA and flagellin(s).

It localises to the cytoplasm. Its function is as follows. Acts as an anti-CsrA protein, binds CsrA and prevents it from repressing translation of its target genes, one of which is flagellin. Binds to flagellin and participates in the assembly of the flagellum. The sequence is that of Flagellar assembly factor FliW from Leptospira interrogans serogroup Icterohaemorrhagiae serovar Lai (strain 56601).